Reading from the N-terminus, the 2386-residue chain is Protein kinase rad3 (2386 aa).

Positions 1386 to 1943 (TLGIVSLNCG…LWQLMATIKS (558 aa)) constitute an FAT domain. The PI3K/PI4K catalytic domain occupies 2052-2370 (FEDEVDIMNS…QIQELIKSAV (319 aa)). The tract at residues 2058 to 2064 (IMNSLQK) is G-loop. The tract at residues 2227–2235 (GLGDRHGEN) is catalytic loop. An activation loop region spans residues 2247–2271 (HVDFNCLFDKGLTFEKPEKVPFRLT). Residues 2354–2386 (IPLSIEGQIQELIKSAVNPKNLVEMYIGWAAYF) form the FATC domain.

It belongs to the PI3/PI4-kinase family. ATM subfamily. As to quaternary structure, interacts with crb2 (via BRCT domain). Interacts with chk1.

The protein localises to the nucleus. The enzyme catalyses L-seryl-[protein] + ATP = O-phospho-L-seryl-[protein] + ADP + H(+). It catalyses the reaction L-threonyl-[protein] + ATP = O-phospho-L-threonyl-[protein] + ADP + H(+). Functionally, serine/threonine kinase which activates checkpoint signaling upon genotoxic stresses. Involved in G2 arrest following DNA damage where it phosphorylates chk1. Phosphorylation of 'Thr-73' and 'Ser-80' of checkpoint mediator crb2 promotes its interaction with chk1. It is also involved in the dependence of mitosis on the completion of DNA replication. This chain is Protein kinase rad3 (rad3), found in Schizosaccharomyces pombe (strain 972 / ATCC 24843) (Fission yeast).